Consider the following 653-residue polypeptide: MAENKWLRNGFVWIVLIIAVVALWVTFMKDGGSAREENFADVAADIRQGRVARIVMTEGSNDIQVQYIGEEEPRSSRLPPDVNIYQALEQYGLSGADVEIRVNPASQWGNWLSALTFILPTLFLIGIVIFMMRQAQGTNNQAISFGKSRARMFTGNKPTVTFADVAGVEEAKEELVEVVEFLKYPDKFASLGARIPRGVLLVGPPGTGKTLLSRAVAGEAGVPFFSISGSEFVEMFVGVGASRVRDLFDQAKRNAPCIVFIDEIDAVGRQRGAGLGGSHDEREQTLNQILVEMDGFDSTTNVIVIAATNRPDVLDPALLRPGRFDRQVVLDRPDIAGRRAILEVHSRGKPLESDVDLEELARQTPGFSGADLENLVNEAAILAARRNKKTIGRRELTEAIDRVIAGPERKSRVLSEREKLMTAYHEAGHALVARMLPHADPVHKVSIVARGMMGGYTRVLPEEDRFFWTKKQFEDQLAVFMGGHVAEELVFQEISTGAANDIERATNLARRMVTEYGMSKTLGPLAFGRKEELVFLGREINEQRNYSDEVAYMIDQEIRSLIDTAYKRAHEILSQHMDKLEAIAMLLMEAETIDGHELEALFDEPRPRPQLVGPPVTRPAALAHKTEEADRGGERSPHPQPHPSPTMRPQPAS.

Residues M1–R8 lie on the Cytoplasmic side of the membrane. A helical membrane pass occupies residues N9–K29. Residues D30–N110 lie on the Extracellular side of the membrane. A helical membrane pass occupies residues W111–M131. Over M132–S653 the chain is Cytoplasmic. ATP is bound at residue G203 to T210. H425 is a binding site for Zn(2+). The active site involves E426. Zn(2+) contacts are provided by H429 and D501. The tract at residues E604 to S653 is disordered. A compositionally biased stretch (basic and acidic residues) spans H624–P637. A compositionally biased stretch (pro residues) spans H638–S653.

The protein in the central section; belongs to the AAA ATPase family. This sequence in the C-terminal section; belongs to the peptidase M41 family. As to quaternary structure, homohexamer. The cofactor is Zn(2+).

It localises to the cell membrane. Acts as a processive, ATP-dependent zinc metallopeptidase for both cytoplasmic and membrane proteins. Plays a role in the quality control of integral membrane proteins. This Sphaerobacter thermophilus (strain ATCC 49802 / DSM 20745 / KCCM 41009 / NCIMB 13125 / S 6022) protein is ATP-dependent zinc metalloprotease FtsH 1.